A 70-amino-acid chain; its full sequence is NAD(P)H-quinone oxidoreductase subunit L (70 aa).

The next 2 membrane-spanning stretches (helical) occupy residues 2–22 (IVPL…PVAL) and 39–59 (TFMY…SPFV).

Belongs to the complex I NdhL subunit family. As to quaternary structure, NDH-1 can be composed of about 15 different subunits; different subcomplexes with different compositions have been identified which probably have different functions.

It is found in the cellular thylakoid membrane. The catalysed reaction is a plastoquinone + NADH + (n+1) H(+)(in) = a plastoquinol + NAD(+) + n H(+)(out). It catalyses the reaction a plastoquinone + NADPH + (n+1) H(+)(in) = a plastoquinol + NADP(+) + n H(+)(out). In terms of biological role, NDH-1 shuttles electrons from an unknown electron donor, via FMN and iron-sulfur (Fe-S) centers, to quinones in the respiratory and/or the photosynthetic chain. The immediate electron acceptor for the enzyme in this species is believed to be plastoquinone. Couples the redox reaction to proton translocation, and thus conserves the redox energy in a proton gradient. Cyanobacterial NDH-1 also plays a role in inorganic carbon-concentration. This Trichormus variabilis (strain ATCC 29413 / PCC 7937) (Anabaena variabilis) protein is NAD(P)H-quinone oxidoreductase subunit L.